The sequence spans 269 residues: Seven in absentia homolog 3 (269 aa).

The segment at 61-132 adopts an SIAH-type; degenerate zinc-finger fold; that stretch reads GSFHPHHLSH…VVPHLRQIHR (72 aa). The Zn(2+) site is built by C107, C114, H126, and H131.

Belongs to the SINA (Seven in absentia) family.

It is found in the mitochondrion. Functionally, negative regulator of PRKN translocation to damaged mitochondria. Acts probably by destabilizing PINK1 protein, hence inhibiting PRKN targeting to dysfunctional depolarized mitochondria. The chain is Seven in absentia homolog 3 (SIAH3) from Homo sapiens (Human).